The chain runs to 338 residues: Phosphate acyltransferase (338 aa).

This sequence belongs to the PlsX family. As to quaternary structure, homodimer. Probably interacts with PlsY.

The protein localises to the cytoplasm. The enzyme catalyses a fatty acyl-[ACP] + phosphate = an acyl phosphate + holo-[ACP]. It participates in lipid metabolism; phospholipid metabolism. In terms of biological role, catalyzes the reversible formation of acyl-phosphate (acyl-PO(4)) from acyl-[acyl-carrier-protein] (acyl-ACP). This enzyme utilizes acyl-ACP as fatty acyl donor, but not acyl-CoA. The chain is Phosphate acyltransferase from Alcanivorax borkumensis (strain ATCC 700651 / DSM 11573 / NCIMB 13689 / SK2).